Reading from the N-terminus, the 306-residue chain is Protein FAM228A (306 aa).

Residues 237–277 form a disordered region; the sequence is HASKLSQQNKGAEKKGLALGTRAQRPRSWAAADSPQGTPLV. Ser-270 is subject to Phosphoserine.

It belongs to the FAM228 family.

The chain is Protein FAM228A (Fam228a) from Rattus norvegicus (Rat).